The sequence spans 597 residues: Aspartate--tRNA(Asp/Asn) ligase (597 aa).

Glu-175 contributes to the L-aspartate binding site. An aspartate region spans residues 199–202 (QQYK). Residues Arg-221 and His-456 each contribute to the L-aspartate site. An ATP-binding site is contributed by 221–223 (RDE). Residue Glu-490 coordinates ATP. Position 497 (Arg-497) interacts with L-aspartate. An ATP-binding site is contributed by 542–545 (GVDR).

It belongs to the class-II aminoacyl-tRNA synthetase family. Type 1 subfamily. As to quaternary structure, homodimer.

The protein localises to the cytoplasm. It carries out the reaction tRNA(Asx) + L-aspartate + ATP = L-aspartyl-tRNA(Asx) + AMP + diphosphate. Aspartyl-tRNA synthetase with relaxed tRNA specificity since it is able to aspartylate not only its cognate tRNA(Asp) but also tRNA(Asn). Reaction proceeds in two steps: L-aspartate is first activated by ATP to form Asp-AMP and then transferred to the acceptor end of tRNA(Asp/Asn). The polypeptide is Aspartate--tRNA(Asp/Asn) ligase (Beijerinckia indica subsp. indica (strain ATCC 9039 / DSM 1715 / NCIMB 8712)).